Consider the following 199-residue polypeptide: Protein-methionine-sulfoxide reductase heme-binding subunit MsrQ (199 aa).

Helical transmembrane passes span 10 to 30, 82 to 102, 116 to 136, and 153 to 173; these read WLKV…FWAI, LWCF…ELGI, PYLT…LTST, and VVYL…KILS.

The protein belongs to the MsrQ family. As to quaternary structure, heterodimer of a catalytic subunit (MsrP) and a heme-binding subunit (MsrQ). FMN serves as cofactor. It depends on heme b as a cofactor.

The protein localises to the cell inner membrane. Part of the MsrPQ system that repairs oxidized periplasmic proteins containing methionine sulfoxide residues (Met-O), using respiratory chain electrons. Thus protects these proteins from oxidative-stress damage caused by reactive species of oxygen and chlorine generated by the host defense mechanisms. MsrPQ is essential for the maintenance of envelope integrity under bleach stress, rescuing a wide series of structurally unrelated periplasmic proteins from methionine oxidation, including the primary periplasmic chaperone SurA and the lipoprotein Pal. MsrQ provides electrons for reduction to the reductase catalytic subunit MsrP, using the quinone pool of the respiratory chain. The chain is Protein-methionine-sulfoxide reductase heme-binding subunit MsrQ from Salmonella agona (strain SL483).